Consider the following 828-residue polypeptide: Protein kintoun (828 aa).

5 disordered regions span residues 1 to 31 (MSGSTASARNKHSKGNLKHNNNKNKNNDEPI), 223 to 250 (KNPTDEELEPHPLEHSFPTKPTAGEGEP), 383 to 424 (DSGV…PTSN), 556 to 668 (APVQ…HRGI), and 741 to 828 (KKNQ…EDLI). The segment covering 9–22 (RNKHSKGNLKHNNN) has biased composition (basic residues). At Ser384 the chain carries Phosphoserine. The segment covering 395–414 (PVEEEEDGEDEIEAEEEEEE) has biased composition (acidic residues). A compositionally biased stretch (basic and acidic residues) spans 556 to 573 (APVQEDKPGDIQFKRNDQ). Over residues 591–601 (EREEGEIEEAE) the composition is skewed to acidic residues. Residues 606–620 (KKSASKKQRGKRNKK) show a composition bias toward basic residues. Residues 625-641 (SESACVSLPTSVDSQPM) show a composition bias toward polar residues. Residues 741-755 (KKNQKRRDCKLRAQQ) are compositionally biased toward basic residues. Ser759 is subject to Phosphoserine. The segment covering 788–808 (DSGLDLTRHNKKRELAEEADN) has biased composition (basic and acidic residues). Positions 815–828 (EMDDDDDDEDEDLI) are enriched in acidic residues.

This sequence belongs to the PIH1 family. Kintoun subfamily. Interacts with Pp1alpha-96A, Pp1-87B, Pp1-13C and flw.

It localises to the cytoplasm. Required for cytoplasmic pre-assembly of axonemal dyneins, thereby playing a central role in motility in cilia and flagella. Involved in pre-assembly of dynein arm complexes in the cytoplasm before intraflagellar transport loads them for the ciliary compartment. The polypeptide is Protein kintoun (Drosophila willistoni (Fruit fly)).